The following is a 181-amino-acid chain: Endoglucanase (181 aa).

C4 and C16 are oxidised to a cystine. Residue D24 is the Nucleophile of the active site. 5 cysteine pairs are disulfide-bonded: C30-C69, C32-C176, C65-C178, C72-C157, and C103-C113. D132 functions as the Proton donor in the catalytic mechanism.

Digestive gland.

The enzyme catalyses Endohydrolysis of (1-&gt;4)-beta-D-glucosidic linkages in cellulose, lichenin and cereal beta-D-glucans.. Functionally, active towards the soluble carboxymethylcellulose (CMC). Possesses expansin activity too. This Mytilus edulis (Blue mussel) protein is Endoglucanase.